A 534-amino-acid polypeptide reads, in one-letter code: Unguisins hydrolase ungD' (534 aa).

The protein belongs to the peptidase S12 family.

The protein operates within secondary metabolite biosynthesis. Hydrolase; part of the gene cluster that mediates the biosynthesis of the unguisins, gamma-aminobutyric acid (GABA)-containing fungal cyclic heptapeptides with the amino acid sequence cyclo-(D-Ala1-D-Val2-L-Leu3-beta-MePhe4-D-Ala5-D-Trp6-GABA7) for unguisin H and cyclo-(D-Ala1-D-Ala2-L-Leu3-beta-MePhe4-D-Ala5-D-Trp6-GABA7) for unguisin I. Within the pathway, the hydrolase ungD' catalyzes the hydrolysis between the D-tryptophan and GABA residues of unguisins H and I to produce the corresponding linear peptides. The alanine racemase ungC' catalyzes the interconversion of L-alanine and D-alanine, providing the D-alanine which is accepted by the first adenylation domain of the nonribosomal peptide synthetase (NRPS) ungA', whereas the methyltransferase ungE' provides the (2R,3R)-beta-methylphenylalanine residue incorporated by the module 4. UngA' is the main enzyme within the cluster which condenses the 7 residues using its respective 7 modules. The terminal condensation domain (Ct) is involved in cyclization with D-alanine and thereby releasing of unguisins H and I. The sequence is that of Unguisins hydrolase ungD' from Aspergillus campestris (strain IBT 28561).